Consider the following 319-residue polypeptide: NH(3)-dependent NAD(+) synthetase (319 aa).

33–40 (GLSGGIDS) is an ATP binding site. Asp39 contributes to the Mg(2+) binding site. Arg169 contributes to the deamido-NAD(+) binding site. Thr189 contacts ATP. A Mg(2+)-binding site is contributed by Glu194. The deamido-NAD(+) site is built by Lys202 and Asp209. 2 residues coordinate ATP: Lys218 and Thr240.

It belongs to the NAD synthetase family. In terms of assembly, homodimer.

It catalyses the reaction deamido-NAD(+) + NH4(+) + ATP = AMP + diphosphate + NAD(+) + H(+). Its pathway is cofactor biosynthesis; NAD(+) biosynthesis; NAD(+) from deamido-NAD(+) (ammonia route): step 1/1. Functionally, catalyzes the ATP-dependent amidation of deamido-NAD to form NAD. Uses ammonia as a nitrogen source. This chain is NH(3)-dependent NAD(+) synthetase, found in Mesorhizobium japonicum (strain LMG 29417 / CECT 9101 / MAFF 303099) (Mesorhizobium loti (strain MAFF 303099)).